A 299-amino-acid polypeptide reads, in one-letter code: Taste receptor type 2 member 4 (299 aa).

The Extracellular portion of the chain corresponds to 1 to 9 (MLRLFYFSA). The chain crosses the membrane as a helical span at residues 10–30 (IIASVILNFVGIIMNLFITVV). At 31–46 (NCKTWVKSHRISSSDR) the chain is on the cytoplasmic side. A helical membrane pass occupies residues 47 to 67 (ILFSLGITRFLMLGLFLVNTI). Residues 68–81 (YFVSSNXERSVYLS) are Extracellular-facing. The chain crosses the membrane as a helical span at residues 82–102 (AFFVLCFMFLDSSSLWFVTLL). Over 103-131 (NILYCVKITNFQHSVFLLLKRNISPKIPR) the chain is Cytoplasmic. Residues 132 to 152 (LLLACVLISAFTTCLYITLSQ) traverse the membrane as a helical segment. Topologically, residues 153–172 (ASPFPELVTTRNNTSFNINE) are extracellular. Residues Asn-164 and Asn-165 are each glycosylated (N-linked (GlcNAc...) asparagine). The chain crosses the membrane as a helical span at residues 173-193 (GILSLVVSLVLSSSLQFIINV). At 194–230 (TSASLLIHSLRRHIQKMQKNATGFWNPQTEAHVGAMK) the chain is on the cytoplasmic side. Residues 231–251 (LMVYFLILYIPYSVATLVQYL) form a helical membrane-spanning segment. At 252-262 (PFYAGMDMGTK) the chain is on the extracellular side. A helical membrane pass occupies residues 263 to 283 (SICLIFATLYSPGHSVLIIIT). Residues 284–299 (HPKLKTTAKKILCFKK) lie on the Cytoplasmic side of the membrane.

It belongs to the G-protein coupled receptor T2R family.

It localises to the membrane. Its subcellular location is the cell projection. It is found in the cilium membrane. In terms of biological role, gustducin-coupled receptor implicated in the perception of bitter compounds in the oral cavity and the gastrointestinal tract. Signals through PLCB2 and the calcium-regulated cation channel TRPM5. In airway epithelial cells, binding of denatonium increases the intracellular calcium ion concentration and stimulates ciliary beat frequency. This Pan troglodytes (Chimpanzee) protein is Taste receptor type 2 member 4 (TAS2R4).